Consider the following 92-residue polypeptide: Large ribosomal subunit protein bL34m (92 aa).

The transit peptide at 1–46 (MALLAGSLLGPTSRSAALLGGRWLQPRAWLGFPDAWGLPTPQQARG) directs the protein to the mitochondrion. The span at 40-57 (TPQQARGKSRGNEYQPSN) shows a compositional bias: polar residues. The segment at 40–63 (TPQQARGKSRGNEYQPSNIKRKNK) is disordered. Ser-71 is modified (phosphoserine).

The protein belongs to the bacterial ribosomal protein bL34 family. In terms of assembly, component of the mitochondrial ribosome large subunit (39S) which comprises a 16S rRNA and about 50 distinct proteins.

Its subcellular location is the mitochondrion. In Macaca fascicularis (Crab-eating macaque), this protein is Large ribosomal subunit protein bL34m (MRPL34).